A 341-amino-acid polypeptide reads, in one-letter code: UDP-3-O-acylglucosamine N-acyltransferase (341 aa).

Residue histidine 239 is the Proton acceptor of the active site.

This sequence belongs to the transferase hexapeptide repeat family. LpxD subfamily. As to quaternary structure, homotrimer.

It catalyses the reaction a UDP-3-O-[(3R)-3-hydroxyacyl]-alpha-D-glucosamine + a (3R)-hydroxyacyl-[ACP] = a UDP-2-N,3-O-bis[(3R)-3-hydroxyacyl]-alpha-D-glucosamine + holo-[ACP] + H(+). The protein operates within bacterial outer membrane biogenesis; LPS lipid A biosynthesis. Its function is as follows. Catalyzes the N-acylation of UDP-3-O-acylglucosamine using 3-hydroxyacyl-ACP as the acyl donor. Is involved in the biosynthesis of lipid A, a phosphorylated glycolipid that anchors the lipopolysaccharide to the outer membrane of the cell. The sequence is that of UDP-3-O-acylglucosamine N-acyltransferase from Shewanella oneidensis (strain ATCC 700550 / JCM 31522 / CIP 106686 / LMG 19005 / NCIMB 14063 / MR-1).